The primary structure comprises 300 residues: MILEGGGVMNLNPGNNLLHQPPAWTDSYSTCNVSSGFFGGQWHEIHPQYWTKYQVWEWLQHLLDTNQLDANCIPFQEFDINGEHLCSMSLQEFTRAAGTAGQLLYSNLQHLKWNGQCSSDLFQSTHNVIVKTEQTEPSIMNTWKDENYLYDTNYGSTVDLLDSKTFCRAQISMTTTSHLPVAESPDMKKEQDPPAKCHTKKHNPRGTHLWEFIRDILLNPDKNPGLIKWEDRSEGVFRFLKSEAVAQLWGKKKNNSSMTYEKLSRAMRYYYKREILERVDGRRLVYKFGKNARGWRENEN.

A PNT domain is found at 29-115 (STCNVSSGFF…SNLQHLKWNG (87 aa)). The interval 183 to 202 (ESPDMKKEQDPPAKCHTKKH) is disordered. Residues 185–195 (PDMKKEQDPPA) show a composition bias toward basic and acidic residues. A DNA-binding region (ETS) is located at residues 207–289 (THLWEFIRDI…DGRRLVYKFG (83 aa)).

This sequence belongs to the ETS family. Expressed exclusively in tissues with a high content of epithelial cells. Highly expressed in salivary gland, mammary gland, prostate, and lung. Weakly expressed in kidney and colon. Not detected in heart, brain, placenta, liver, skeletal muscle, spleen, thymus, testis, ovary, small intestine or peripheral blood leukocytes.

The protein localises to the nucleus. In terms of biological role, transcriptional activator that may play a role in regulating epithelial cell differentiation and proliferation. May act as a repressor for a specific subset of ETS/AP-1-responsive genes and as a modulator of the nuclear response to mitogen-activated protein kinase signaling cascades. Binds to DNA sequences containing the consensus nucleotide core sequence GGAA. Involved in regulation of TNFRSF10B/DR5 expression through Ets-binding sequences on the TNFRSF10B/DR5 promoter. May contribute to development and carcinogenesis by acting as a tumor suppressor gene or anti-oncogene. In Homo sapiens (Human), this protein is ETS homologous factor.